The chain runs to 261 residues: Taurine import ATP-binding protein TauB (261 aa).

Positions 4-233 constitute an ABC transporter domain; the sequence is LQLEGIGAHY…RYSAGESARA (230 aa). ATP is bound at residue 38 to 45; it reads GPSGSGKT.

The protein belongs to the ABC transporter superfamily. Taurine importer (TC 3.A.1.17.1) family. As to quaternary structure, the complex is composed of two ATP-binding proteins (TauB), two transmembrane proteins (TauC) and a solute-binding protein (TauA).

Its subcellular location is the cell inner membrane. The enzyme catalyses taurine(out) + ATP + H2O = taurine(in) + ADP + phosphate + H(+). In terms of biological role, part of the ABC transporter complex TauABC involved in taurine import. Responsible for energy coupling to the transport system. This is Taurine import ATP-binding protein TauB from Pseudomonas syringae pv. tomato (strain ATCC BAA-871 / DC3000).